A 237-amino-acid polypeptide reads, in one-letter code: Phosphatidylserine decarboxylase proenzyme (237 aa).

S206 acts as the Schiff-base intermediate with substrate; via pyruvic acid in catalysis. S206 carries the post-translational modification Pyruvic acid (Ser); by autocatalysis.

It belongs to the phosphatidylserine decarboxylase family. PSD-A subfamily. In terms of assembly, heterodimer of a large membrane-associated beta subunit and a small pyruvoyl-containing alpha subunit. It depends on pyruvate as a cofactor. In terms of processing, is synthesized initially as an inactive proenzyme. Formation of the active enzyme involves a self-maturation process in which the active site pyruvoyl group is generated from an internal serine residue via an autocatalytic post-translational modification. Two non-identical subunits are generated from the proenzyme in this reaction, and the pyruvate is formed at the N-terminus of the alpha chain, which is derived from the carboxyl end of the proenzyme. The post-translation cleavage follows an unusual pathway, termed non-hydrolytic serinolysis, in which the side chain hydroxyl group of the serine supplies its oxygen atom to form the C-terminus of the beta chain, while the remainder of the serine residue undergoes an oxidative deamination to produce ammonia and the pyruvoyl prosthetic group on the alpha chain.

It localises to the cell membrane. It carries out the reaction a 1,2-diacyl-sn-glycero-3-phospho-L-serine + H(+) = a 1,2-diacyl-sn-glycero-3-phosphoethanolamine + CO2. The protein operates within phospholipid metabolism; phosphatidylethanolamine biosynthesis; phosphatidylethanolamine from CDP-diacylglycerol: step 2/2. Its function is as follows. Catalyzes the formation of phosphatidylethanolamine (PtdEtn) from phosphatidylserine (PtdSer). This chain is Phosphatidylserine decarboxylase proenzyme, found in Rhodococcus opacus (strain B4).